Consider the following 361-residue polypeptide: sn-glycerol-3-phosphate import ATP-binding protein UgpC (361 aa).

The ABC transporter domain occupies 4–235 (LSLKGVRKSY…PATVFVAGFI (232 aa)). Position 37-44 (37-44 (GPSGCGKS)) interacts with ATP.

The protein belongs to the ABC transporter superfamily. sn-glycerol-3-phosphate importer (TC 3.A.1.1.3) family. In terms of assembly, the complex is composed of two ATP-binding proteins (UgpC), two transmembrane proteins (UgpA and UgpE) and a solute-binding protein (UgpB).

The protein resides in the cell inner membrane. The enzyme catalyses sn-glycerol 3-phosphate(out) + ATP + H2O = sn-glycerol 3-phosphate(in) + ADP + phosphate + H(+). Part of the ABC transporter complex UgpBAEC involved in sn-glycerol-3-phosphate (G3P) import. Responsible for energy coupling to the transport system. The sequence is that of sn-glycerol-3-phosphate import ATP-binding protein UgpC from Burkholderia lata (strain ATCC 17760 / DSM 23089 / LMG 22485 / NCIMB 9086 / R18194 / 383).